Reading from the N-terminus, the 271-residue chain is Endonuclease V (271 aa).

The interval 46–67 is disordered; that stretch reads TRTGDAPDVDQTTLSTSADDRT. Asp-76 and Asp-140 together coordinate Mg(2+).

This sequence belongs to the endonuclease V family. The cofactor is Mg(2+).

The protein resides in the cytoplasm. It carries out the reaction Endonucleolytic cleavage at apurinic or apyrimidinic sites to products with a 5'-phosphate.. Functionally, DNA repair enzyme involved in the repair of deaminated bases. Selectively cleaves double-stranded DNA at the second phosphodiester bond 3' to a deoxyinosine leaving behind the intact lesion on the nicked DNA. The polypeptide is Endonuclease V (Haloarcula marismortui (strain ATCC 43049 / DSM 3752 / JCM 8966 / VKM B-1809) (Halobacterium marismortui)).